The primary structure comprises 98 residues: uncharacterized protein (98 aa).

Positions 37–91 (LITSRQQLGISQKQLETLSGVKQPMIARIEKGQTNPQLETLLKLLAPLGKTLSIV) constitute an HTH cro/C1-type domain. The segment at residues 48 to 67 (QKQLETLSGVKQPMIARIEK) is a DNA-binding region (H-T-H motif).

This is an uncharacterized protein from Haemophilus influenzae (strain ATCC 51907 / DSM 11121 / KW20 / Rd).